A 161-amino-acid polypeptide reads, in one-letter code: Cytochrome b6-f complex subunit 4 (161 aa).

3 consecutive transmembrane segments (helical) span residues 37 to 57, 96 to 116, and 130 to 150; these read LLYI…GLAV, LLGV…PFIE, and AMTV…GAAF.

This sequence belongs to the cytochrome b family. PetD subfamily. As to quaternary structure, the 4 large subunits of the cytochrome b6-f complex are cytochrome b6, subunit IV (17 kDa polypeptide, PetD), cytochrome f and the Rieske protein, while the 4 small subunits are PetG, PetL, PetM and PetN. The complex functions as a dimer.

Its subcellular location is the cellular thylakoid membrane. In terms of biological role, component of the cytochrome b6-f complex, which mediates electron transfer between photosystem II (PSII) and photosystem I (PSI), cyclic electron flow around PSI, and state transitions. In Synechococcus elongatus, this protein is Cytochrome b6-f complex subunit 4.